We begin with the raw amino-acid sequence, 708 residues long: Nicastrin (708 aa).

Positions 1-34 (MATARGGSGPDPGSRGLLLLSFSVVLAGLCGGNS) are cleaved as a signal peptide. At 35–668 (VERKIYIPLN…IFLIASKELE (634 aa)) the chain is on the lumenal side. Asn-44, Asn-54, and Asn-128 each carry an N-linked (GlcNAc...) asparagine glycan. A disulfide bridge connects residues Cys-49 and Cys-61. Cysteines 139 and 158 form a disulfide. Residues Asn-186 and Asn-203 are each glycosylated (N-linked (GlcNAc...) asparagine). 2 disulfides stabilise this stretch: Cys-194/Cys-212 and Cys-229/Cys-247. N-linked (GlcNAc...) asparagine glycans are attached at residues Asn-263, Asn-386, Asn-434, Asn-463, Asn-507, Asn-529, Asn-561, Asn-572, Asn-579, Asn-593, and Asn-611. A disulfide bond links Cys-585 and Cys-619. Residues 669 to 689 (FITLIVGFSILVFSLIVTYCI) traverse the membrane as a helical segment. At 690–708 (NAKADVLFVAPREPGAVSY) the chain is on the cytoplasmic side.

This sequence belongs to the nicastrin family. Component of the gamma-secretase complex. The functional gamma-secretase complex is composed of at least four polypeptides: a presenilin homodimer (PSEN1 or PSEN2), nicastrin (NCSTN), APH1 (APH1A or APH1B) and PEN2. Binds to proteolytic processed C-terminal fragments C83 and C99 of the amyloid precursor protein (APP). Interacts with PSEN1 and PSEN2. N-glycosylated.

The protein resides in the membrane. It is found in the cytoplasmic vesicle membrane. Its subcellular location is the melanosome. Its function is as follows. Essential subunit of the gamma-secretase complex, an endoprotease complex that catalyzes the intramembrane cleavage of integral membrane proteins such as Notch receptors and APP (amyloid-beta precursor protein). The gamma-secretase complex plays a role in Notch and Wnt signaling cascades and regulation of downstream processes via its role in processing key regulatory proteins, and by regulating cytosolic CTNNB1 levels. The protein is Nicastrin (Ncstn) of Rattus norvegicus (Rat).